Consider the following 134-residue polypeptide: Cytochrome b5 (134 aa).

Residue alanine 2 is modified to N-acetylalanine. 3 positions are modified to N6-acetyllysine: lysine 7, lysine 10, and lysine 19. The region spanning 9 to 85 (VKYYTLEEIQ…SKTFIIGELH (77 aa)) is the Cytochrome b5 heme-binding domain. Heme-binding residues include histidine 44 and histidine 68. Residues 109–131 (WWTNWVIPAISALVVSLMYHFYT) form a helical membrane-spanning segment.

This sequence belongs to the cytochrome b5 family.

It localises to the endoplasmic reticulum membrane. Its subcellular location is the microsome membrane. It is found in the cytoplasm. Its function is as follows. Cytochrome b5 is a membrane-bound hemoprotein functioning as an electron carrier for several membrane-bound oxygenases. This is Cytochrome b5 (CYB5A) from Sus scrofa (Pig).